Consider the following 405-residue polypeptide: Low-salt glycan biosynthesis sulfotransferase Agl7 (405 aa).

Ca(2+) is bound by residues aspartate 24, aspartate 201, and histidine 202.

It belongs to the sulfatase family. It depends on Ca(2+) as a cofactor.

It participates in protein modification; protein glycosylation. The protein operates within cell surface structure biogenesis; S-layer biogenesis. Its function is as follows. Involved in N-glycan biosynthetic pathway that takes place under low-salt conditions (1.75 M instead of 3.4 M). Participates in the formation of the tetrasaccharide present at 'Asn-532' of S-layer glycoprotein Csg, consisting of a sulfated hexose, 2 hexoses and rhamnose. Mediates sulfation of sugar 1 in the tetrasaccharide. The sequence is that of Low-salt glycan biosynthesis sulfotransferase Agl7 from Haloferax volcanii (strain ATCC 29605 / DSM 3757 / JCM 8879 / NBRC 14742 / NCIMB 2012 / VKM B-1768 / DS2) (Halobacterium volcanii).